A 216-amino-acid polypeptide reads, in one-letter code: Cytidylate kinase (216 aa).

7 to 15 (GPSGTGKST) provides a ligand contact to ATP.

The protein belongs to the cytidylate kinase family. Type 1 subfamily.

It is found in the cytoplasm. The catalysed reaction is CMP + ATP = CDP + ADP. The enzyme catalyses dCMP + ATP = dCDP + ADP. The sequence is that of Cytidylate kinase from Chlamydia pneumoniae (Chlamydophila pneumoniae).